The chain runs to 389 residues: Putative zinc finger CCCH domain-containing protein 10 (389 aa).

Residues 1–11 (MANVSFTFDSQ) are compositionally biased toward polar residues. The interval 1–110 (MANVSFTFDS…QDRRGSESRM (110 aa)) is disordered. Basic and acidic residues-rich tracts occupy residues 12 to 52 (EQNK…RVSE) and 86 to 110 (RSHE…ESRM). 2 consecutive C3H1-type zinc fingers follow at residues 131 to 157 (RPGE…YNHP) and 158 to 190 (PLQE…HPKE). A disordered region spans residues 183 to 296 (CPFNHPKERD…ATATGKVSGK (114 aa)). 2 stretches are compositionally biased toward basic and acidic residues: residues 204 to 243 (PDLR…KEDA) and 251 to 284 (RPRD…RSSR).

The protein is Putative zinc finger CCCH domain-containing protein 10 of Arabidopsis thaliana (Mouse-ear cress).